The primary structure comprises 97 residues: Conotoxin Cal6.1b (97 aa).

The first 22 residues, 1 to 22, serve as a signal peptide directing secretion; that stretch reads MKLTTVLVVALLVLAACQFTVT. The segment at 22-46 is disordered; that stretch reads TDNSGDDPENPSLRSAGENQNPDST. Positions 23–68 are excised as a propeptide; the sequence is DNSGDDPENPSLRSAGENQNPDSTKTITAWATRDMTNMRRGLNRPS. 3 disulfides stabilise this stretch: C71-C87, C78-C91, and C86-C96.

Belongs to the conotoxin O1 superfamily. Expressed by the venom duct.

It localises to the secreted. Functionally, probable neurotoxin with unknown target. Possibly targets ion channels. The protein is Conotoxin Cal6.1b of Californiconus californicus (California cone).